A 102-amino-acid polypeptide reads, in one-letter code: Thioredoxin (102 aa).

Residues 2–102 (VTEIKSLKQL…KAKIVQLVSQ (101 aa)) enclose the Thioredoxin domain. A disulfide bridge connects residues Cys-30 and Cys-33.

Belongs to the thioredoxin family.

Its function is as follows. Participates in various redox reactions through the reversible oxidation of its active center dithiol to a disulfide and catalyzes dithiol-disulfide exchange reactions. In Mycoplasma pneumoniae (strain ATCC 29342 / M129 / Subtype 1) (Mycoplasmoides pneumoniae), this protein is Thioredoxin (trxA).